The following is a 95-amino-acid chain: Large ribosomal subunit protein bL25 (95 aa).

Belongs to the bacterial ribosomal protein bL25 family. Part of the 50S ribosomal subunit; part of the 5S rRNA/L5/L18/L25 subcomplex. Contacts the 5S rRNA. Binds to the 5S rRNA independently of L5 and L18.

In terms of biological role, this is one of the proteins that binds to the 5S RNA in the ribosome where it forms part of the central protuberance. This Shewanella piezotolerans (strain WP3 / JCM 13877) protein is Large ribosomal subunit protein bL25.